A 156-amino-acid polypeptide reads, in one-letter code: Small ribosomal subunit protein uS7 (156 aa).

It belongs to the universal ribosomal protein uS7 family. Part of the 30S ribosomal subunit. Contacts proteins S9 and S11.

Its function is as follows. One of the primary rRNA binding proteins, it binds directly to 16S rRNA where it nucleates assembly of the head domain of the 30S subunit. Is located at the subunit interface close to the decoding center, probably blocks exit of the E-site tRNA. This is Small ribosomal subunit protein uS7 from Shewanella sp. (strain W3-18-1).